The following is a 644-amino-acid chain: Biosynthetic arginine decarboxylase (644 aa).

N6-(pyridoxal phosphate)lysine is present on Lys-100. 282–292 is a binding site for substrate; sequence CDVGGGLAIDY.

This sequence belongs to the Orn/Lys/Arg decarboxylase class-II family. SpeA subfamily. The cofactor is Mg(2+). Pyridoxal 5'-phosphate is required as a cofactor.

The catalysed reaction is L-arginine + H(+) = agmatine + CO2. In terms of biological role, catalyzes the biosynthesis of agmatine from arginine. In Gloeobacter violaceus (strain ATCC 29082 / PCC 7421), this protein is Biosynthetic arginine decarboxylase.